The primary structure comprises 159 residues: Phosphopantetheine adenylyltransferase (159 aa).

Threonine 10 contacts substrate. ATP-binding positions include 10–11 and histidine 18; that span reads TF. Substrate-binding residues include lysine 42, methionine 74, and arginine 88. Residues 89-91, glutamate 99, and 124-130 contribute to the ATP site; these read GLR and WSFISSS.

The protein belongs to the bacterial CoaD family. As to quaternary structure, homohexamer. Mg(2+) serves as cofactor.

It localises to the cytoplasm. The enzyme catalyses (R)-4'-phosphopantetheine + ATP + H(+) = 3'-dephospho-CoA + diphosphate. It functions in the pathway cofactor biosynthesis; coenzyme A biosynthesis; CoA from (R)-pantothenate: step 4/5. In terms of biological role, reversibly transfers an adenylyl group from ATP to 4'-phosphopantetheine, yielding dephospho-CoA (dPCoA) and pyrophosphate. This is Phosphopantetheine adenylyltransferase from Cronobacter sakazakii (strain ATCC BAA-894) (Enterobacter sakazakii).